The following is a 150-amino-acid chain: MQLGRKVTSHHDIDRFGVASTADESVYRPLPPRLRLAQVNLSRRRCRTQSDMYKSRFSECTVQSVDVSVTELRAHLSDWLDRARAGGEVVITERGIPIARLAALDSTDTLERLTAEGVIGKATAQRPVAAGRPRPRPQRPVSDRVSDQRR.

The interval 124–150 (AQRPVAAGRPRPRPQRPVSDRVSDQRR) is disordered. Residues 141–150 (VSDRVSDQRR) are compositionally biased toward basic and acidic residues.

The protein belongs to the phD/YefM antitoxin family.

Functionally, possibly the antitoxin component of a type II toxin-antitoxin (TA) system. Its cognate toxin is VapC45 (Potential). The sequence is that of Putative antitoxin VapB45 (vapB45) from Mycobacterium tuberculosis (strain CDC 1551 / Oshkosh).